The following is a 101-amino-acid chain: Small ribosomal subunit protein uS14A (101 aa).

Belongs to the universal ribosomal protein uS14 family. Part of the 30S ribosomal subunit. Contacts proteins S3 and S10.

In terms of biological role, binds 16S rRNA, required for the assembly of 30S particles and may also be responsible for determining the conformation of the 16S rRNA at the A site. The protein is Small ribosomal subunit protein uS14A of Salinispora arenicola (strain CNS-205).